Consider the following 355-residue polypeptide: D-alanine--D-alanine ligase (355 aa).

The ATP-grasp domain maps to 143–350 (KTIFSNHKLP…IEQLVAKLVD (208 aa)). 178 to 233 (LKKLKFPVFVKPSNSGSSLGISKVKNESEILLALEKAWGIDPRILIEEGLEVREIE) is an ATP binding site. Positions 303, 317, and 319 each coordinate Mg(2+).

Belongs to the D-alanine--D-alanine ligase family. It depends on Mg(2+) as a cofactor. The cofactor is Mn(2+).

The protein localises to the cytoplasm. The catalysed reaction is 2 D-alanine + ATP = D-alanyl-D-alanine + ADP + phosphate + H(+). It functions in the pathway cell wall biogenesis; peptidoglycan biosynthesis. In terms of biological role, cell wall formation. This Prochlorococcus marinus (strain MIT 9301) protein is D-alanine--D-alanine ligase.